Here is a 397-residue protein sequence, read N- to C-terminus: DNA excision repair protein ERCC-8 (397 aa).

WD repeat units follow at residues 41–81, 97–137, 184–224, 243–282, and 332–371; these read IHGS…RQPH, VHKY…AADV, GHRQ…GCLL, AHNG…NTLV, and GHYK…PVPD. A phosphoserine mark is found at serine 391, serine 392, and serine 393.

Part of the CSA complex (also named DCX(ERCC8) complex), a DCX E3 ubiquitin-protein ligase complex containing ERCC8, RBX1, DDB1 and CUL4A; the CSA complex interacts with RNA polymerase II; upon UV irradiation it interacts with the COP9 signalosome and preferentially with the hyperphosphorylated form of RNA polymerase II. Interacts with ERCC6/CSB (via CIM motif); promoting recruitment to lesion-stalled RNA polymerase II (Pol II). Interacts with KIAA1530/UVSSA. Interacts with a subunit of RNA polymerase II TFIIH.

The protein resides in the nucleus. It localises to the chromosome. Its subcellular location is the nucleus matrix. Its pathway is protein modification; protein ubiquitination. Substrate-recognition component of the CSA complex, a DCX (DDB1-CUL4-X-box) E3 ubiquitin-protein ligase complex, involved in transcription-coupled nucleotide excision repair (TC-NER), a process during which RNA polymerase II-blocking lesions are rapidly removed from the transcribed strand of active genes. Following recruitment to lesion-stalled RNA polymerase II (Pol II), the CSA complex mediates ubiquitination of Pol II subunit POLR2A/RPB1 at 'Lys-1268', a critical TC-NER checkpoint, governing RNA Pol II stability and initiating DNA damage excision by TFIIH recruitment. The CSA complex also promotes the ubiquitination and subsequent proteasomal degradation of ERCC6/CSB in a UV-dependent manner; ERCC6 degradation is essential for the recovery of RNA synthesis after transcription-coupled repair. Also plays a role in DNA double-strand breaks (DSSBs) repair by non-homologous end joining (NHEJ). This Mus musculus (Mouse) protein is DNA excision repair protein ERCC-8.